The sequence spans 485 residues: Leukocyte receptor cluster member 9 (485 aa).

The C3H1-type zinc finger occupies S8–A35. Positions E212–S247 are disordered.

The chain is Leukocyte receptor cluster member 9 (Leng9) from Mus musculus (Mouse).